Reading from the N-terminus, the 275-residue chain is Diaminopimelate epimerase (275 aa).

Substrate is bound by residues Asn12, Gln45, and Asn65. Catalysis depends on Cys74, which acts as the Proton donor. Substrate is bound by residues 75-76 (GN), Asn158, Asn191, and 209-210 (ER). The active-site Proton acceptor is Cys218. Position 219–220 (219–220 (GT)) interacts with substrate.

The protein belongs to the diaminopimelate epimerase family. In terms of assembly, homodimer.

It localises to the cytoplasm. It catalyses the reaction (2S,6S)-2,6-diaminopimelate = meso-2,6-diaminopimelate. Its pathway is amino-acid biosynthesis; L-lysine biosynthesis via DAP pathway; DL-2,6-diaminopimelate from LL-2,6-diaminopimelate: step 1/1. In terms of biological role, catalyzes the stereoinversion of LL-2,6-diaminopimelate (L,L-DAP) to meso-diaminopimelate (meso-DAP), a precursor of L-lysine and an essential component of the bacterial peptidoglycan. The chain is Diaminopimelate epimerase from Shewanella denitrificans (strain OS217 / ATCC BAA-1090 / DSM 15013).